A 177-amino-acid chain; its full sequence is Nuclear export protein (177 aa).

2 short sequence motifs (nuclear export signal) span residues 91–100 (LWLPMKSLSL) and 117–127 (MKHQILTRLKL).

Binds M1 protein. May interact with human nucleoporins and exportin XPO1/CRM1.

It is found in the virion. It localises to the host nucleus. Its function is as follows. Mediates the nuclear export of encapsidated genomic RNAs (ribonucleoproteins, RNPs). Acts as an adapter between viral RNPs complexes and the nuclear export machinery of the cell. Possesses no intrinsic RNA-binding activity, but includes a C-terminal M1-binding domain. This domain is believed to allow recognition of RNPs to which the M1 protein is bound. Because the M1 protein is not available in large quantities until the later stages of infection, such an indirect recognition mechanism probably ensures that genomic RNPs are not exported from the nucleus before sufficient quantities of viral mRNA and progeny genomic RNA have been synthesized. Furthermore, the RNPs enters the cytoplasm only when they have associated with the M1 protein that is necessary to guide them to the plasma membrane. May down-regulate viral RNA synthesis when overproduced. This is Nuclear export protein (NS) from Homo sapiens (Human).